Reading from the N-terminus, the 642-residue chain is Chaperone protein DnaK (642 aa).

A Phosphothreonine; by autocatalysis modification is found at Thr-200. Residues 603–623 show a composition bias toward low complexity; that stretch reads AAAAEQGGNADAASGNAQASK. A disordered region spans residues 603–627; the sequence is AAAAEQGGNADAASGNAQASKAADD.

The protein belongs to the heat shock protein 70 family.

In terms of biological role, acts as a chaperone. This Xanthomonas campestris pv. campestris (strain B100) protein is Chaperone protein DnaK.